The chain runs to 336 residues: MTLRIGVIGTGAIGRDHMRRINQTLSGAKVTAVSDVNIESVRTARADLAPEAEVVGSGEEVAASAGVDAVVVTSWGATHEQYVLAAIAAGKPVFCEKPLSTTAAGAGRIVEAETAFGRRLVQVGFMRRYDAGYRMLKAVVENEIGRPLMVHAAHRNPSVPEQYITPMAIQDTLIHEIDVLRWLLDDDYVSAQVISPRRTRHAHARVEDPQIVLLETKSGIRIDVEIFVNCRYGYDIQCQVVGEEGLASLPDPMAVVMRKDAKLQSAIMTDWKDRFIDSYDLELQDFIKAAARGTASGPTAWDGYVAAVSSDACVEAQSRPGSIVPISLPARPPLYN.

This sequence belongs to the Gfo/Idh/MocA family. In terms of assembly, homotetramer.

It carries out the reaction myo-inositol + NAD(+) = scyllo-inosose + NADH + H(+). Functionally, involved in the oxidation of myo-inositol (MI) to 2-keto-myo-inositol (2KMI or 2-inosose). In Acidiphilium cryptum (strain JF-5), this protein is Inositol 2-dehydrogenase.